We begin with the raw amino-acid sequence, 300 residues long: Ribosomal protein L11 methyltransferase (300 aa).

T152, G173, D195, and N234 together coordinate S-adenosyl-L-methionine.

This sequence belongs to the methyltransferase superfamily. PrmA family.

Its subcellular location is the cytoplasm. The catalysed reaction is L-lysyl-[protein] + 3 S-adenosyl-L-methionine = N(6),N(6),N(6)-trimethyl-L-lysyl-[protein] + 3 S-adenosyl-L-homocysteine + 3 H(+). In terms of biological role, methylates ribosomal protein L11. The polypeptide is Ribosomal protein L11 methyltransferase (Burkholderia vietnamiensis (strain G4 / LMG 22486) (Burkholderia cepacia (strain R1808))).